A 162-amino-acid chain; its full sequence is ATP synthase subunit b (162 aa).

A helical transmembrane segment spans residues 6–25 (TLFTLVTFLVLMLAVGKVAW).

Belongs to the ATPase B chain family. As to quaternary structure, F-type ATPases have 2 components, F(1) - the catalytic core - and F(0) - the membrane proton channel. F(1) has five subunits: alpha(3), beta(3), gamma(1), delta(1), epsilon(1). F(0) has three main subunits: a(1), b(2) and c(10-14). The alpha and beta chains form an alternating ring which encloses part of the gamma chain. F(1) is attached to F(0) by a central stalk formed by the gamma and epsilon chains, while a peripheral stalk is formed by the delta and b chains.

The protein resides in the cell membrane. Its function is as follows. F(1)F(0) ATP synthase produces ATP from ADP in the presence of a proton or sodium gradient. F-type ATPases consist of two structural domains, F(1) containing the extramembraneous catalytic core and F(0) containing the membrane proton channel, linked together by a central stalk and a peripheral stalk. During catalysis, ATP synthesis in the catalytic domain of F(1) is coupled via a rotary mechanism of the central stalk subunits to proton translocation. Functionally, component of the F(0) channel, it forms part of the peripheral stalk, linking F(1) to F(0). The chain is ATP synthase subunit b from Lacticaseibacillus paracasei (strain ATCC 334 / BCRC 17002 / CCUG 31169 / CIP 107868 / KCTC 3260 / NRRL B-441) (Lactobacillus paracasei).